The primary structure comprises 299 residues: Leucine zipper transcription factor-like protein 1 (299 aa).

The stretch at 96–296 forms a coiled coil; sequence LKLQTDISEL…DLRKRLAQYE (201 aa). The interaction with BSS9 stretch occupies residues 145-299; sequence GTAELLNKEI…KRLAQYEPED (155 aa).

It belongs to the LZTFL1 family. Self-associates. Interacts with BBS9; the interaction mediates the association of LZTL1 with the BBsome complex and regulates BBSome ciliary trafficking. As to expression, expressed in prostate, ovary, stomach, pancreas, esophagus, breast, liver, bladder, kidney, thyroid, colon and lung (at protein level). Down-regulated in multiple primary tumors (at protein level). Detected in testis, heart, skeletal muscle, thymus, spleen, small intestine, and peripheral blood leukocytes.

The protein localises to the cytoplasm. In terms of biological role, regulates ciliary localization of the BBSome complex. Together with the BBSome complex, controls SMO ciliary trafficking and contributes to the sonic hedgehog (SHH) pathway regulation. May play a role in neurite outgrowth. May have tumor suppressor function. The sequence is that of Leucine zipper transcription factor-like protein 1 (LZTFL1) from Homo sapiens (Human).